A 702-amino-acid chain; its full sequence is Heparin-sulfate lyase (702 aa).

Positions 1–17 are cleaved as a signal peptide; that stretch reads MKNIFFICFCALFAFSG. The active-site Proton acceptor is the Y314.

This sequence belongs to the polysaccharide lyase 12 family.

The protein resides in the periplasm. The enzyme catalyses Elimination of sulfate, appears to act on linkages between N-acetyl-D-glucosamine and uronate. Product is an unsaturated sugar.. Its function is as follows. Specifically cleaves heparan sulfate-rich regions of acidic polysaccharides. Does not act on N,O-desulfated glucosamine or N-acetyl-O-sulfated glucosamine linkages. Functions in cleaving metazoan heparan sulfate and providing carbon, nitrogen and sulfate sources for microorganisms. The chain is Heparin-sulfate lyase (hepC) from Bacteroides thetaiotaomicron (strain ATCC 29148 / DSM 2079 / JCM 5827 / CCUG 10774 / NCTC 10582 / VPI-5482 / E50).